A 443-amino-acid polypeptide reads, in one-letter code: FAD-dependent monooxygenase orf3 (443 aa).

The helical transmembrane segment at 5-25 (SIEVAIIGAGITGITLALGLL) threads the bilayer. 2 residues coordinate FAD: Glu-35 and Gly-48. Asn-75 and Asn-87 each carry an N-linked (GlcNAc...) asparagine glycan. Arg-116 is a binding site for FAD. Residue Arg-199 is part of the active site. FAD contacts are provided by Asp-315 and Ala-328.

This sequence belongs to the paxM FAD-dependent monooxygenase family. FAD serves as cofactor.

It localises to the membrane. It participates in secondary metabolite biosynthesis. Functionally, FAD-dependent monooxygenase; part of the gene cluster that mediates the biosynthesis of nigerpyrone and its derivatives carbonarone A and pestalamide A. The biosynthesis pathway begins with the polyketide assembly by epaA to form phenylacetyl triketide precursor from successive condensation of two malonyl-CoA, presumably with one phenylacetyl-CoA starter unit produced by the phenylacetyl-CoA ligase epaB. For the nigerpyrone biosynthesis, the reactive polyketide chain is released as an aldehyde through the R-domain. A nonenzymatic cyclization and dehydration may create nigerpyrone. For the biosynthesis of carbonarone A and pestalamide A, an extra methyl group is added through the C-methyltransferase domain. Several further steps involving the dehydrogenase orf1, the cytochrome P450 monooxygenase orf2 and the FAD-dependent monooxygenase orf3 are required to form a carbonarone A precursor which is converted to carbonarone A via cyclization. The O-acetyltransferase epaC could catalyze the transfer of 2-methylsuccinyl-CoA, a common intermediate in the ethylmalonyl-CoA pathway, to generate the final product pestalamide A. This chain is FAD-dependent monooxygenase orf3, found in Aspergillus niger (strain ATCC MYA-4892 / CBS 513.88 / FGSC A1513).